Consider the following 101-residue polypeptide: uncharacterized protein (101 aa).

The N-terminal stretch at 1 to 18 (MSINALLYVLSLALLIWT) is a signal peptide. Residues 62-82 (FQFDSIPSSSLSLSPFPFLFF) form a helical membrane-spanning segment.

It is found in the membrane. This is an uncharacterized protein from Saccharomyces cerevisiae (strain ATCC 204508 / S288c) (Baker's yeast).